The primary structure comprises 100 residues: Small ribosomal subunit protein bS18c (100 aa).

The interval 81 to 100 (KQFERTESTPRTTGPRTRKK) is disordered. Over residues 89-100 (TPRTTGPRTRKK) the composition is skewed to low complexity.

It belongs to the bacterial ribosomal protein bS18 family. In terms of assembly, part of the 30S ribosomal subunit.

The protein localises to the plastid. Its subcellular location is the chloroplast. This chain is Small ribosomal subunit protein bS18c, found in Nandina domestica (Heavenly bamboo).